A 466-amino-acid polypeptide reads, in one-letter code: 3-isopropylmalate dehydratase large subunit (466 aa).

C347, C407, and C410 together coordinate [4Fe-4S] cluster.

The protein belongs to the aconitase/IPM isomerase family. LeuC type 1 subfamily. As to quaternary structure, heterodimer of LeuC and LeuD. [4Fe-4S] cluster is required as a cofactor.

The catalysed reaction is (2R,3S)-3-isopropylmalate = (2S)-2-isopropylmalate. It participates in amino-acid biosynthesis; L-leucine biosynthesis; L-leucine from 3-methyl-2-oxobutanoate: step 2/4. Its function is as follows. Catalyzes the isomerization between 2-isopropylmalate and 3-isopropylmalate, via the formation of 2-isopropylmaleate. The sequence is that of 3-isopropylmalate dehydratase large subunit from Acidiphilium cryptum (strain JF-5).